Reading from the N-terminus, the 371-residue chain is Protein lifeguard 1 (371 aa).

A disordered region spans residues 1–145; that stretch reads MSHEKSFLVS…EGPPSYYDNQ (145 aa). Pro residues predominate over residues 14–49; sequence YPPPNPGYPGGPQPPMPPYAQPPYPGAPYPQPPFQP. The segment covering 84 to 98 has biased composition (low complexity); the sequence is YPQEGYPQGPYPQGG. The span at 102 to 114 shows a compositional bias: pro residues; that stretch reads GPYPQSPFPPNPY. The next 7 helical transmembrane spans lie at 165 to 185, 197 to 217, 228 to 248, 253 to 273, 283 to 303, 307 to 327, and 346 to 366; these read VFLV…VFTF, VWTY…LSCC, LVAL…IASF, AVIM…IFSM, MGVL…CIFI, ILEI…LAVD, and FAAL…LTII.

Belongs to the BI1 family. LFG subfamily.

The protein resides in the membrane. Its function is as follows. Potential apoptotic regulator. The polypeptide is Protein lifeguard 1 (GRINA) (Homo sapiens (Human)).